A 576-amino-acid chain; its full sequence is Aspartate--tRNA ligase (576 aa).

Glu-170 serves as a coordination point for L-aspartate. Residues 194–197 (QLFK) are aspartate. Arg-216 provides a ligand contact to L-aspartate. ATP contacts are provided by residues 216–218 (RDE) and Gln-225. Position 438 (His-438) interacts with L-aspartate. An ATP-binding site is contributed by Glu-471. Arg-478 serves as a coordination point for L-aspartate. 523 to 526 (GLDR) serves as a coordination point for ATP.

The protein belongs to the class-II aminoacyl-tRNA synthetase family. Type 1 subfamily. As to quaternary structure, homodimer.

Its subcellular location is the cytoplasm. The catalysed reaction is tRNA(Asp) + L-aspartate + ATP = L-aspartyl-tRNA(Asp) + AMP + diphosphate. In terms of biological role, catalyzes the attachment of L-aspartate to tRNA(Asp) in a two-step reaction: L-aspartate is first activated by ATP to form Asp-AMP and then transferred to the acceptor end of tRNA(Asp). The chain is Aspartate--tRNA ligase from Fervidobacterium nodosum (strain ATCC 35602 / DSM 5306 / Rt17-B1).